We begin with the raw amino-acid sequence, 134 residues long: Rhoptry antigen protein (134 aa).

2 disordered regions span residues M21–K82 and Q96–L134. The span at K29–D38 shows a compositional bias: polar residues. Residues E39–G54 are compositionally biased toward low complexity. A compositionally biased stretch (basic and acidic residues) spans G57–M69. Residues P102–R113 are compositionally biased toward basic residues. The span at D114–K126 shows a compositional bias: basic and acidic residues.

In Plasmodium falciparum, this protein is Rhoptry antigen protein.